The chain runs to 942 residues: PH and SEC7 domain-containing protein C11E3.11c (942 aa).

A compositionally biased stretch (polar residues) spans 1–18 (MSRNASNAYLKNGNSTPS). Disordered stretches follow at residues 1–128 (MSRN…TRLN) and 259–308 (SRNL…ETTR). The span at 24 to 40 (PSSLSQRSKTSTRSSKP) shows a compositional bias: low complexity. 4 stretches are compositionally biased toward polar residues: residues 50–60 (WFKNESSSRHP), 90–125 (ASMS…SSRT), 271–284 (YGNS…SSNY), and 292–305 (NRQS…STSE). The SEC7 domain occupies 295 to 497 (SSLSIPKSTS…LSSYKSFASN (203 aa)). The region spanning 681-804 (PYIKQGILKF…WIDALNYWAA (124 aa)) is the PH domain.

This is PH and SEC7 domain-containing protein C11E3.11c from Schizosaccharomyces pombe (strain 972 / ATCC 24843) (Fission yeast).